Here is a 266-residue protein sequence, read N- to C-terminus: Undecaprenyl-diphosphatase (266 aa).

8 consecutive transmembrane segments (helical) span residues 1-21, 39-59, 87-107, 111-131, 149-169, 183-203, 218-238, and 246-266; these read METF…FLPI, QGFS…VIYF, WWII…KDFI, LRNT…LWWA, ALLI…RSGA, AAAK…AILV, ALGI…YYFL, and MTPF…LILW.

The protein belongs to the UppP family.

It is found in the cell inner membrane. It carries out the reaction di-trans,octa-cis-undecaprenyl diphosphate + H2O = di-trans,octa-cis-undecaprenyl phosphate + phosphate + H(+). Catalyzes the dephosphorylation of undecaprenyl diphosphate (UPP). Confers resistance to bacitracin. The protein is Undecaprenyl-diphosphatase of Shewanella denitrificans (strain OS217 / ATCC BAA-1090 / DSM 15013).